Reading from the N-terminus, the 253-residue chain is Ubiquinone/menaquinone biosynthesis C-methyltransferase UbiE (253 aa).

S-adenosyl-L-methionine is bound by residues threonine 76, aspartate 97, 125–126 (NA), and serine 142.

This sequence belongs to the class I-like SAM-binding methyltransferase superfamily. MenG/UbiE family.

The enzyme catalyses a 2-demethylmenaquinol + S-adenosyl-L-methionine = a menaquinol + S-adenosyl-L-homocysteine + H(+). The catalysed reaction is a 2-methoxy-6-(all-trans-polyprenyl)benzene-1,4-diol + S-adenosyl-L-methionine = a 5-methoxy-2-methyl-3-(all-trans-polyprenyl)benzene-1,4-diol + S-adenosyl-L-homocysteine + H(+). The protein operates within quinol/quinone metabolism; menaquinone biosynthesis; menaquinol from 1,4-dihydroxy-2-naphthoate: step 2/2. Its pathway is cofactor biosynthesis; ubiquinone biosynthesis. Methyltransferase required for the conversion of demethylmenaquinol (DMKH2) to menaquinol (MKH2) and the conversion of 2-polyprenyl-6-methoxy-1,4-benzoquinol (DDMQH2) to 2-polyprenyl-3-methyl-6-methoxy-1,4-benzoquinol (DMQH2). The chain is Ubiquinone/menaquinone biosynthesis C-methyltransferase UbiE from Xylella fastidiosa (strain M23).